Reading from the N-terminus, the 515-residue chain is GMP synthase [glutamine-hydrolyzing] (515 aa).

Residues 6 to 198 (KVIIIDYGSQ…LFHVAKLKAD (193 aa)) form the Glutamine amidotransferase type-1 domain. Cysteine 83 (nucleophile) is an active-site residue. Active-site residues include histidine 172 and glutamate 174. Residues 199–390 (WTMSSFVERA…LGLPDFIIWR (192 aa)) form the GMPS ATP-PPase domain. 226 to 232 (SGGIDST) is an ATP binding site.

As to quaternary structure, homodimer.

It carries out the reaction XMP + L-glutamine + ATP + H2O = GMP + L-glutamate + AMP + diphosphate + 2 H(+). Its pathway is purine metabolism; GMP biosynthesis; GMP from XMP (L-Gln route): step 1/1. Functionally, catalyzes the synthesis of GMP from XMP. The polypeptide is GMP synthase [glutamine-hydrolyzing] (Nitratidesulfovibrio vulgaris (strain DSM 19637 / Miyazaki F) (Desulfovibrio vulgaris)).